We begin with the raw amino-acid sequence, 359 residues long: Histidinol-phosphate aminotransferase (359 aa).

Lys-217 carries the N6-(pyridoxal phosphate)lysine modification.

The protein belongs to the class-II pyridoxal-phosphate-dependent aminotransferase family. Histidinol-phosphate aminotransferase subfamily. As to quaternary structure, homodimer. Requires pyridoxal 5'-phosphate as cofactor.

It carries out the reaction L-histidinol phosphate + 2-oxoglutarate = 3-(imidazol-4-yl)-2-oxopropyl phosphate + L-glutamate. It participates in amino-acid biosynthesis; L-histidine biosynthesis; L-histidine from 5-phospho-alpha-D-ribose 1-diphosphate: step 7/9. The chain is Histidinol-phosphate aminotransferase from Salmonella arizonae (strain ATCC BAA-731 / CDC346-86 / RSK2980).